A 480-amino-acid polypeptide reads, in one-letter code: Endothelial transcription factor GATA-2 (480 aa).

A Phosphoserine modification is found at S73. Position 86 is an asymmetric dimethylarginine (R86). The tract at residues 166 to 208 (SGSHLFGFPPTPPKEVSPDPSTTGAASPASSSAGGSVARGEDK) is disordered. The span at 183–201 (PDPSTTGAASPASSSAGGS) shows a compositional bias: low complexity. S192 is subject to Phosphoserine. GATA-type zinc fingers lie at residues 295-319 (CVNCGATATPLWRRDGTGHYLCNAC) and 349-373 (CANCQTTTTTLWRRNANGDPVCNAC). A Glycyl lysine isopeptide (Lys-Gly) (interchain with G-Cter in SUMO2) cross-link involves residue K389. Residues 457–480 (TPIHPSSSLSFGHPHPSSMVTAMG) form a disordered region.

As to quaternary structure, interacts with BRD3. Interacts with AR and CCAR1. Interacts with MDFIC.

The protein resides in the nucleus. Its function is as follows. Transcriptional activator which regulates endothelin-1 gene expression in endothelial cells. Binds to the consensus sequence 5'-AGATAG-3'. In Mus musculus (Mouse), this protein is Endothelial transcription factor GATA-2 (Gata2).